Here is a 787-residue protein sequence, read N- to C-terminus: Bifunctional dethiobiotin synthetase/adenosylmethionine-8-amino-7-oxononanoate aminotransferase (787 aa).

An ATP-binding site is contributed by 23-28; it reads DVGKTI. Threonine 27 contacts Mg(2+). Threonine 54 is a binding site for substrate. Mg(2+)-binding residues include aspartate 61 and glutamate 123. ATP-binding positions include 123–126 and 184–185; these read ETAG and KD. 323 to 324 contributes to the (8S)-8-amino-7-oxononanoate binding site; it reads WW. Residue 384-385 participates in pyridoxal 5'-phosphate binding; that stretch reads GS. Tyrosine 421 is a (8S)-8-amino-7-oxononanoate binding site. Aspartate 582 is a pyridoxal 5'-phosphate binding site. Residues lysine 611 and glycine 645 each coordinate (8S)-8-amino-7-oxononanoate. 646–647 is a pyridoxal 5'-phosphate binding site; the sequence is HS. (8S)-8-amino-7-oxononanoate is bound at residue arginine 756.

It in the N-terminal section; belongs to the dethiobiotin synthetase family. In the C-terminal section; belongs to the class-III pyridoxal-phosphate-dependent aminotransferase family. BioA subfamily. In terms of assembly, homodimer. The cofactor is Mg(2+). It depends on pyridoxal 5'-phosphate as a cofactor.

It is found in the mitochondrion matrix. The catalysed reaction is (7R,8S)-7,8-diammoniononanoate + CO2 + ATP = (4R,5S)-dethiobiotin + ADP + phosphate + 3 H(+). It carries out the reaction (8S)-8-amino-7-oxononanoate + S-adenosyl-L-methionine = S-adenosyl-4-methylsulfanyl-2-oxobutanoate + (7R,8S)-7,8-diammoniononanoate. Its pathway is cofactor biosynthesis; biotin biosynthesis; biotin from 7,8-diaminononanoate: step 1/2. It participates in cofactor biosynthesis; biotin biosynthesis; 7,8-diaminononanoate from 8-amino-7-oxononanoate (SAM route): step 1/1. Functionally, bifunctional enzyme; part of the cluster involved in the biosynthesis of biotin (also known as vitamin B8 or vitamin H), a water-soluble vitamin that functions as a prosthetic group of many carboxylases, such as acetyl-CoA carboxylase and pyruvate carboxylase. Catalyzes a mechanistically unusual reaction, the ATP-dependent insertion of CO2 between the N7 and N8 nitrogen atoms of 7,8-diaminopelargonic acid (DAPA) to form an ureido ring. Also catalyzes the transfer of the alpha-amino group from S-adenosyl-L-methionine (SAM) to 7-keto-8-aminopelargonic acid (KAPA) to form 7,8-diaminopelargonic acid (DAPA). It is the only animotransferase known to utilize SAM as an amino donor. The protein is Bifunctional dethiobiotin synthetase/adenosylmethionine-8-amino-7-oxononanoate aminotransferase of Emericella nidulans (strain FGSC A4 / ATCC 38163 / CBS 112.46 / NRRL 194 / M139) (Aspergillus nidulans).